The primary structure comprises 593 residues: Aspartate--tRNA(Asp/Asn) ligase (593 aa).

Glutamate 173 lines the L-aspartate pocket. Residues glutamine 197 to lysine 200 are aspartate. L-aspartate is bound at residue arginine 219. ATP is bound by residues arginine 219 to glutamate 221 and glutamine 228. L-aspartate is bound at residue histidine 451. Residue glutamate 485 participates in ATP binding. Residue arginine 492 coordinates L-aspartate. Position 537 to 540 (glycine 537 to arginine 540) interacts with ATP.

Belongs to the class-II aminoacyl-tRNA synthetase family. Type 1 subfamily. As to quaternary structure, homodimer.

The protein localises to the cytoplasm. It carries out the reaction tRNA(Asx) + L-aspartate + ATP = L-aspartyl-tRNA(Asx) + AMP + diphosphate. Functionally, aspartyl-tRNA synthetase with relaxed tRNA specificity since it is able to aspartylate not only its cognate tRNA(Asp) but also tRNA(Asn). Reaction proceeds in two steps: L-aspartate is first activated by ATP to form Asp-AMP and then transferred to the acceptor end of tRNA(Asp/Asn). The protein is Aspartate--tRNA(Asp/Asn) ligase of Legionella pneumophila (strain Paris).